The chain runs to 87 residues: Cytochrome c5 (87 aa).

Positions 19, 22, 23, and 63 each coordinate heme. Cysteine 69 and cysteine 72 are oxidised to a cystine.

The protein belongs to the cytochrome c family. In terms of assembly, homodimer. Binds 1 heme group per subunit.

It is unreactive with cytochrome c reductase or oxidase but seems to function as an intermediate in nitrate respiration of facultative anaerobic pseudmonads. The chain is Cytochrome c5 from Ectopseudomonas mendocina (Pseudomonas mendocina).